A 230-amino-acid chain; its full sequence is Ribosomal RNA small subunit methyltransferase G (230 aa).

Residues glycine 74, phenylalanine 79, 124–125, and arginine 141 contribute to the S-adenosyl-L-methionine site; that span reads AE.

It belongs to the methyltransferase superfamily. RNA methyltransferase RsmG family.

Its subcellular location is the cytoplasm. In terms of biological role, specifically methylates the N7 position of a guanine in 16S rRNA. The chain is Ribosomal RNA small subunit methyltransferase G from Acholeplasma laidlawii (strain PG-8A).